A 776-amino-acid chain; its full sequence is K(+) efflux antiporter 3, chloroplastic (776 aa).

Residues 1–72 (MAISTMLGSI…KVFLDTSKRF (72 aa)) constitute a chloroplast transit peptide. The Lumenal, thylakoid segment spans residues 73–93 (YFQGRWSESSGRRVETYAGVD). Residues 94–114 (VASAVDVINDLGFDTLTFLMV) form a helical membrane-spanning segment. Residue threonine 115 is a topological domain, stromal. Residues 116–136 (VIIVPAFRILKASPILGFFFA) traverse the membrane as a helical segment. Residues 137–153 (GVVLNQFGLIRNLTDVK) are Lumenal, thylakoid-facing. A helical transmembrane segment spans residues 154 to 174 (VLSEWGILFLLFEMGLELSLA). Over 175 to 181 (RLKALAK) the chain is Stromal. The helical transmembrane segment at 182–202 (FAFGMGLTQVLLCTAAFTAFE) threads the bilayer. The Lumenal, thylakoid segment spans residues 203–232 (LPPNGAIGTKILEFLFHSRPDLVNIRSIDE). The helical transmembrane segment at 233-253 (AVVIGAALSLSSSAFVLQLLA) threads the bilayer. Residues 254–266 (EKGELPTRFGSAT) are Stromal-facing. A helical membrane pass occupies residues 267–287 (LGILLLQDIAVVPLLVILPVL). At 288–296 (ESQDIGGES) the chain is on the lumenal, thylakoid side. Residues 297–317 (IWPMLAKESAKALGGLGILSL) traverse the membrane as a helical segment. At 318-338 (GGKFFLRRIFEVVAETRSSEA) the chain is on the stromal side. A helical membrane pass occupies residues 339-359 (FVALCLLTVAGTSLVTQWLGF). The Lumenal, thylakoid segment spans residues 360 to 389 (SDTLGAFLAGALLAETNFRTQIEADIRPFR). The helical transmembrane segment at 390 to 410 (GLLLGLFFVTTGTSIDMEVLF) threads the bilayer. The Stromal segment spans residues 411–415 (REWPN). The chain crosses the membrane as a helical span at residues 416–436 (VLSLLGGLIVIKTLIITAIGP). At 437 to 445 (RVGLTIQES) the chain is on the lumenal, thylakoid side. A helical transmembrane segment spans residues 446–466 (VRVGFLLSQGGEFAFVVFSLA). Over 467–468 (NR) the chain is Stromal. The chain crosses the membrane as a helical span at residues 469 to 489 (LGVLPNELNKLLIIVVVLSMA). Over 490-526 (LTPYLNQLGRKAADFLDERLDPGEKIGEDVNFDVSES) the chain is Lumenal, thylakoid. An RCK N-terminal domain is found at 524–649 (SESIVIIGFG…KKAGATDAIL (126 aa)). A helical membrane pass occupies residues 527–547 (IVIIGFGQMGQVLANFLSTPL). Residues 548-776 (VSDSDLVGWP…FVGKADKAQD (229 aa)) are Stromal-facing. The interval 728 to 776 (MQMKASDSNSDSAAEILQETAGLSQPPEIDDSSVNIDNGFVGKADKAQD) is disordered.

This sequence belongs to the monovalent cation:proton antiporter 2 (CPA2) transporter (TC 2.A.37) family. KEA (TC 2.A.37.1) subfamily. Expressed at low levels in flowers, siliques and leaves. In terms of tissue distribution, expressed at low levels in flowers and leaves. As to expression, most abundant splice form in all organs, including siliques, flowers, leaves and roots. Preferentially expressed in photosynthetically active tissues, including seedling cotyledons and mature leaves. Expressed in shoots and roots.

The protein resides in the plastid. It is found in the chloroplast membrane. It localises to the golgi apparatus membrane. The protein localises to the chloroplast thylakoid membrane. It catalyses the reaction K(+)(in) + H(+)(out) = K(+)(out) + H(+)(in). Its activity is regulated as follows. Regulated by a mechanism involving lumenal C-terminus region; a fine-tuned balance between photoprotective energy dissipation in high light and a maximum quantum yield in low light involves a reduced activity under high light. Its function is as follows. Electroneutral K(+)/H(+) efflux antiporter assuring proton efflux from the thylakoid lumen to the plastid stroma, thus increasing the membrane potential at the expense of the proton gradient (delta pH) component of the proton motive force (PMF). Promotes photosynthesis and growth in conditions where the chloroplast (cp)ATP synthase activity is low (e.g. cgl160 mutant background) by reducing the pH gradient across the thylakoid membrane. Accelerates photosynthetic acclimation in fluctuating light environments by modulating two components of the proton motive force, the proton gradient and the electric potential (delta Psi). Promotes the relaxation of photoprotective energy-dependent non-photochemical quenching (NPQ) after transitions from high to low light, thus enhancing photosystem II (PSII) quantum efficiency in fluctuating light. On transition from high to low light, slows down photoprotection by dissipating the pH gradient across the thylakoid membrane. During photosynthetic response on transition from dark to low light, involved in a sequential mechanism of adaptation; VCCN1 and CLCe first trigger the activation of photoprotection, which is later down-regulated by KEA3 to a low steady state, while adjusting electron transport. Together with the chloroplast NADH dehydrogenase-like (NDH) complex, maximizes photosynthesis efficiency after a long dark adaptation. Required in roots for rapid hyperosmotic-induced Ca(2+) responses and for osmo-sensory potentiation in hyperosmotic conditions. In terms of biological role, low K(+)/H(+) efflux antiporter activity. Functionally, low K(+)/H(+) efflux antiporter activity. Promotes non-photochemical quenching (NPQ) in high light conditions. This is K(+) efflux antiporter 3, chloroplastic from Arabidopsis thaliana (Mouse-ear cress).